The sequence spans 95 residues: CRISPR-associated endoribonuclease Cas2 (95 aa).

Asp9 lines the Mg(2+) pocket.

Belongs to the CRISPR-associated endoribonuclease Cas2 protein family. As to quaternary structure, homodimer, forms a heterotetramer with a Cas1 homodimer. It depends on Mg(2+) as a cofactor.

In terms of biological role, CRISPR (clustered regularly interspaced short palindromic repeat), is an adaptive immune system that provides protection against mobile genetic elements (viruses, transposable elements and conjugative plasmids). CRISPR clusters contain sequences complementary to antecedent mobile elements and target invading nucleic acids. CRISPR clusters are transcribed and processed into CRISPR RNA (crRNA). Functions as a ssRNA-specific endoribonuclease. Involved in the integration of spacer DNA into the CRISPR cassette. In Methylorubrum extorquens (strain CM4 / NCIMB 13688) (Methylobacterium extorquens), this protein is CRISPR-associated endoribonuclease Cas2.